We begin with the raw amino-acid sequence, 257 residues long: NAD-capped RNA hydrolase NudC (257 aa).

Arginine 69 contacts substrate. Zn(2+)-binding residues include cysteine 98 and cysteine 101. Glutamate 111 provides a ligand contact to substrate. 2 residues coordinate Zn(2+): cysteine 116 and cysteine 119. Position 124 (tyrosine 124) interacts with substrate. In terms of domain architecture, Nudix hydrolase spans 125-248 (PQIAPCIIVA…TVARRLIEDT (124 aa)). A divalent metal cation is bound by residues alanine 158, glutamate 174, and glutamate 178. The Nudix box signature appears at 159 to 180 (GFVEVGETLEQAVAREVMEESG). 192–199 (QPWPFPQS) serves as a coordination point for substrate. A divalent metal cation is bound at residue glutamate 219. Alanine 241 contacts substrate.

It belongs to the Nudix hydrolase family. NudC subfamily. Homodimer. Requires Mg(2+) as cofactor. Mn(2+) is required as a cofactor. The cofactor is Zn(2+).

The enzyme catalyses a 5'-end NAD(+)-phospho-ribonucleoside in mRNA + H2O = a 5'-end phospho-adenosine-phospho-ribonucleoside in mRNA + beta-nicotinamide D-ribonucleotide + 2 H(+). It catalyses the reaction NAD(+) + H2O = beta-nicotinamide D-ribonucleotide + AMP + 2 H(+). The catalysed reaction is NADH + H2O = reduced beta-nicotinamide D-ribonucleotide + AMP + 2 H(+). Functionally, mRNA decapping enzyme that specifically removes the nicotinamide adenine dinucleotide (NAD) cap from a subset of mRNAs by hydrolyzing the diphosphate linkage to produce nicotinamide mononucleotide (NMN) and 5' monophosphate mRNA. The NAD-cap is present at the 5'-end of some mRNAs and stabilizes RNA against 5'-processing. Has preference for mRNAs with a 5'-end purine. Catalyzes the hydrolysis of a broad range of dinucleotide pyrophosphates. The sequence is that of NAD-capped RNA hydrolase NudC from Salmonella schwarzengrund (strain CVM19633).